The sequence spans 254 residues: MFTYKLILGLVLVVSASARYLVFEDLEGESYLVPNQAEDEQVLEGEPFYENAVQLASPRVRRQAQGSVTLNSDGSMGLGAKVPIVGNEKNVLSALGSVDLNDQLKPASRGMGLALDNVNGHGLSVMKETVPGFGDRLTGAGRVNVFHNDNHDISAKAFVTKNMPDFPNVPNFNTVGGGVDYMYKNKVGASLGMANTPFLDRKDYSAMGNLNVFRSPTTSVDFNAGFKKFDTPVFKSNWEPNFGLTFSRSFGNKW.

Residues 1–18 (MFTYKLILGLVLVVSASA) form the signal peptide. Positions 19 to 62 (RYLVFEDLEGESYLVPNQAEDEQVLEGEPFYENAVQLASPRVRR) are excised as a propeptide.

Belongs to the attacin/sarcotoxin-2 family.

Its subcellular location is the secreted. Hemolymph antibacterial protein. In Trichoplusia ni (Cabbage looper), this protein is Attacin-A.